Consider the following 239-residue polypeptide: Ribonuclease 3 (239 aa).

The RNase III domain maps to 18–141 (YLTLEKALGY…LMAGVYLEAG (124 aa)). Glu54 serves as a coordination point for Mg(2+). Asp58 is an active-site residue. Ser127 and Glu130 together coordinate Mg(2+). Glu130 is a catalytic residue. The DRBM domain occupies 168 to 237 (DYKTALQELT…AYQALQKLKE (70 aa)).

It belongs to the ribonuclease III family. In terms of assembly, homodimer. It depends on Mg(2+) as a cofactor.

The protein resides in the cytoplasm. The catalysed reaction is Endonucleolytic cleavage to 5'-phosphomonoester.. In terms of biological role, digests double-stranded RNA. Involved in the processing of primary rRNA transcript to yield the immediate precursors to the large and small rRNAs (23S and 16S). Processes some mRNAs, and tRNAs when they are encoded in the rRNA operon. Processes pre-crRNA and tracrRNA of type II CRISPR loci if present in the organism. In Helicobacter pylori (strain P12), this protein is Ribonuclease 3.